The chain runs to 546 residues: Glucose-6-phosphate isomerase (546 aa).

Catalysis depends on Glu-355, which acts as the Proton donor. Catalysis depends on residues His-386 and Lys-510.

It belongs to the GPI family.

It localises to the cytoplasm. It catalyses the reaction alpha-D-glucose 6-phosphate = beta-D-fructose 6-phosphate. Its pathway is carbohydrate biosynthesis; gluconeogenesis. It participates in carbohydrate degradation; glycolysis; D-glyceraldehyde 3-phosphate and glycerone phosphate from D-glucose: step 2/4. Its function is as follows. Catalyzes the reversible isomerization of glucose-6-phosphate to fructose-6-phosphate. This chain is Glucose-6-phosphate isomerase, found in Buchnera aphidicola subsp. Cinara cedri (strain Cc).